Consider the following 459-residue polypeptide: Exodeoxyribonuclease 7 large subunit (459 aa).

The protein belongs to the XseA family. As to quaternary structure, heterooligomer composed of large and small subunits.

Its subcellular location is the cytoplasm. It catalyses the reaction Exonucleolytic cleavage in either 5'- to 3'- or 3'- to 5'-direction to yield nucleoside 5'-phosphates.. Its function is as follows. Bidirectionally degrades single-stranded DNA into large acid-insoluble oligonucleotides, which are then degraded further into small acid-soluble oligonucleotides. This is Exodeoxyribonuclease 7 large subunit from Pseudomonas fluorescens (strain Pf0-1).